Here is a 202-residue protein sequence, read N- to C-terminus: ATP-dependent Clp protease proteolytic subunit (202 aa).

The active-site Nucleophile is Ser98. His123 is a catalytic residue.

The protein belongs to the peptidase S14 family. In terms of assembly, fourteen ClpP subunits assemble into 2 heptameric rings which stack back to back to give a disk-like structure with a central cavity, resembling the structure of eukaryotic proteasomes.

It localises to the cytoplasm. It catalyses the reaction Hydrolysis of proteins to small peptides in the presence of ATP and magnesium. alpha-casein is the usual test substrate. In the absence of ATP, only oligopeptides shorter than five residues are hydrolyzed (such as succinyl-Leu-Tyr-|-NHMec, and Leu-Tyr-Leu-|-Tyr-Trp, in which cleavage of the -Tyr-|-Leu- and -Tyr-|-Trp bonds also occurs).. In terms of biological role, cleaves peptides in various proteins in a process that requires ATP hydrolysis. Has a chymotrypsin-like activity. Plays a major role in the degradation of misfolded proteins. The sequence is that of ATP-dependent Clp protease proteolytic subunit from Syntrophobacter fumaroxidans (strain DSM 10017 / MPOB).